The chain runs to 445 residues: Mitochondrial enolase superfamily member 1 (445 aa).

Substrate-binding positions include G24–D26, Y34, and K220. K222 (proton donor/acceptor) is an active-site residue. D250 contacts Mg(2+). Residues N252, E276, E305, H355 to G357, and E386 each bind substrate. Positions 276 and 305 each coordinate Mg(2+). H355 is an active-site residue.

The protein belongs to the mandelate racemase/muconate lactonizing enzyme family. ENOSF1 subfamily. Requires Mg(2+) as cofactor.

Its subcellular location is the mitochondrion. It carries out the reaction L-fuconate = 2-dehydro-3-deoxy-L-fuconate + H2O. Plays a role in the catabolism of L-fucose, a sugar that is part of the carbohydrates that are attached to cellular glycoproteins. Catalyzes the dehydration of L-fuconate to 2-keto-3-deoxy-L-fuconate by the abstraction of the 2-proton to generate an enediolate intermediate that is stabilized by the magnesium ion. May down-regulate thymidylate synthase activity, possibly already at the RNA level, by promoting the degradation of TYMS mRNA via an antisense RNA-based mechanism. The sequence is that of Mitochondrial enolase superfamily member 1 (enosf1) from Xenopus laevis (African clawed frog).